We begin with the raw amino-acid sequence, 1231 residues long: Alpha-protein kinase 1 (1231 aa).

Residues phenylalanine 61, glutamine 67, arginine 116, arginine 150 to arginine 153, aspartate 231, lysine 233, serine 236 to threonine 237, and phenylalanine 295 each bind ADP-D-glycero-beta-D-manno-heptose. Disordered regions lie at residues glutamate 508 to threonine 540, glycine 609 to alanine 637, glycine 692 to proline 739, threonine 767 to glutamine 791, proline 811 to glycine 843, and alanine 859 to aspartate 888. A compositionally biased stretch (polar residues) spans arginine 509–lysine 522. The segment covering serine 524–arginine 537 has biased composition (basic and acidic residues). The span at serine 700–serine 714 shows a compositional bias: low complexity. The span at proline 775–aspartate 784 shows a compositional bias: acidic residues. The Alpha-type protein kinase domain occupies lysine 1003 to proline 1223.

Belongs to the protein kinase superfamily. Alpha-type protein kinase family. ALPK subfamily. Widely expressed. Expressed in the retina and in sweat glands, especially in the myoepithelial cells.

Its subcellular location is the cytoplasm. It is found in the cytosol. It localises to the cytoskeleton. The protein localises to the spindle pole. The protein resides in the microtubule organizing center. Its subcellular location is the centrosome. It is found in the cell projection. It localises to the cilium. It catalyses the reaction L-seryl-[protein] + ATP = O-phospho-L-seryl-[protein] + ADP + H(+). The enzyme catalyses L-threonyl-[protein] + ATP = O-phospho-L-threonyl-[protein] + ADP + H(+). Its activity is regulated as follows. Serine/threonine-protein kinase activity is stimulated upon ADP-D-glycero-beta-D-manno-heptose (ADP-Heptose)-binding. Functionally, serine/threonine-protein kinase that detects bacterial pathogen-associated molecular pattern metabolites (PAMPs) and initiates an innate immune response, a critical step for pathogen elimination and engagement of adaptive immunity. Specifically recognizes and binds ADP-D-glycero-beta-D-manno-heptose (ADP-Heptose), a potent PAMP present in all Gram-negative and some Gram-positive bacteria. ADP-Heptose-binding stimulates its kinase activity to phosphorylate and activate TIFA, triggering pro-inflammatory NF-kappa-B signaling. May be involved in monosodium urate monohydrate (MSU)-induced inflammation by mediating phosphorylation of unconventional myosin MYO9A. May also play a role in apical protein transport by mediating phosphorylation of unconventional myosin MYO1A. May play a role in ciliogenesis. This is Alpha-protein kinase 1 from Mus musculus (Mouse).